We begin with the raw amino-acid sequence, 565 residues long: Sensor histidine kinase MtrB (565 aa).

The segment covering 1 to 13 has biased composition (basic residues); sequence MMWGSRRRTRSRW. The interval 1–21 is disordered; sequence MMWGSRRRTRSRWGRSGPMTR. Helical transmembrane passes span 42-62 and 213-233; these read VVAL…FVLT and GTMI…ALLV. In terms of domain architecture, HAMP spans 235 to 287; that stretch reads RQVVVPVRSASRIAERFAEGHLSERMPVRGEDDMARLAMSFNDMAESLSRQIT. A Histidine kinase domain is found at 302 to 519; that stretch reads DVSHELRTPL…CFRLTLPLVR (218 aa). H305 carries the post-translational modification Phosphohistidine; by autocatalysis. Residues 524 to 565 are disordered; sequence TTSPLPMKPIPQPSPSGGQSPSTGPQHAKDRARQREHAERSL. Residues 538–549 show a composition bias toward low complexity; the sequence is PSGGQSPSTGPQ. Basic and acidic residues predominate over residues 550 to 565; the sequence is HAKDRARQREHAERSL.

It is found in the cell membrane. It carries out the reaction ATP + protein L-histidine = ADP + protein N-phospho-L-histidine.. Its function is as follows. Member of the two-component regulatory system MtrA/MtrB. Seems to function as a membrane-associated protein kinase that phosphorylates MtrA in response to environmental signals. This Mycolicibacterium paratuberculosis (strain ATCC BAA-968 / K-10) (Mycobacterium paratuberculosis) protein is Sensor histidine kinase MtrB (mtrB).